The sequence spans 240 residues: 1-(5-phosphoribosyl)-5-[(5-phosphoribosylamino)methylideneamino] imidazole-4-carboxamide isomerase (240 aa).

Residue aspartate 8 is the Proton acceptor of the active site. Aspartate 130 acts as the Proton donor in catalysis.

Belongs to the HisA/HisF family.

It localises to the cytoplasm. The catalysed reaction is 1-(5-phospho-beta-D-ribosyl)-5-[(5-phospho-beta-D-ribosylamino)methylideneamino]imidazole-4-carboxamide = 5-[(5-phospho-1-deoxy-D-ribulos-1-ylimino)methylamino]-1-(5-phospho-beta-D-ribosyl)imidazole-4-carboxamide. The protein operates within amino-acid biosynthesis; L-histidine biosynthesis; L-histidine from 5-phospho-alpha-D-ribose 1-diphosphate: step 4/9. In Elusimicrobium minutum (strain Pei191), this protein is 1-(5-phosphoribosyl)-5-[(5-phosphoribosylamino)methylideneamino] imidazole-4-carboxamide isomerase.